Consider the following 265-residue polypeptide: Ubiquinone biosynthesis protein COQ4 homolog, mitochondrial (265 aa).

The N-terminal 30 residues, M1–P30, are a transit peptide targeting the mitochondrion. 4 residues coordinate Zn(2+): H170, D171, H174, and E186.

Belongs to the COQ4 family. In terms of assembly, component of a multi-subunit COQ enzyme complex. Requires Zn(2+) as cofactor.

The protein resides in the mitochondrion inner membrane. It carries out the reaction a 4-hydroxy-3-methoxy-5-(all-trans-polyprenyl)benzoate + H(+) = a 2-methoxy-6-(all-trans-polyprenyl)phenol + CO2. It participates in cofactor biosynthesis; ubiquinone biosynthesis. Its function is as follows. Lyase that catalyzes the C1-decarboxylation of 4-hydroxy-3-methoxy-5-(all-trans-polyprenyl)benzoic acid into 2-methoxy-6-(all-trans-polyprenyl)phenol during ubiquinone biosynthesis. This chain is Ubiquinone biosynthesis protein COQ4 homolog, mitochondrial, found in Drosophila virilis (Fruit fly).